The primary structure comprises 414 residues: Testis-specific Y-encoded-like protein 4 (414 aa).

Disordered regions lie at residues 1-129 and 391-414; these read MSGL…AGQK and PRRG…FQSG. Positions 24–40 are enriched in basic and acidic residues; sequence ASGDPDRDQCQGLREET. Positions 101–112 are enriched in low complexity; the sequence is EAASAAEAADSS.

This sequence belongs to the nucleosome assembly protein (NAP) family.

The chain is Testis-specific Y-encoded-like protein 4 (TSPYL4) from Homo sapiens (Human).